Reading from the N-terminus, the 241-residue chain is Probable pectate lyase D (241 aa).

Residues 1 to 17 form the signal peptide; sequence MYQKSLLFSLLATSALA. Residue N215 is glycosylated (N-linked (GlcNAc...) asparagine). The tract at residues 215-241 is disordered; the sequence is NNSGDEPEEVSEGPSDACQYSEPLSSC.

The protein belongs to the polysaccharide lyase 3 family. Ca(2+) serves as cofactor.

The protein localises to the secreted. The catalysed reaction is Eliminative cleavage of (1-&gt;4)-alpha-D-galacturonan to give oligosaccharides with 4-deoxy-alpha-D-galact-4-enuronosyl groups at their non-reducing ends.. Functionally, pectinolytic enzyme consist of four classes of enzymes: pectin lyase, polygalacturonase, pectin methylesterase and rhamnogalacturonase. Among pectinolytic enzymes, pectin lyase is the most important in depolymerization of pectin, since it cleaves internal glycosidic bonds of highly methylated pectins. Favors pectate, the anion, over pectin, the methyl ester. This Neosartorya fischeri (strain ATCC 1020 / DSM 3700 / CBS 544.65 / FGSC A1164 / JCM 1740 / NRRL 181 / WB 181) (Aspergillus fischerianus) protein is Probable pectate lyase D (plyD).